Consider the following 1909-residue polypeptide: NFX1-type zinc finger-containing protein 1 (1909 aa).

2 stretches are compositionally biased toward basic and acidic residues: residues 1–12 (MEDRRPHLEARP) and 76–107 (RNQE…EGRS). Disordered regions lie at residues 1 to 133 (MEDR…QPQQ) and 787 to 813 (TQSA…EEEG). A compositionally biased stretch (polar residues) spans 113–122 (SSDTFQQWHT). Over residues 802-813 (EGEEEEEGEEEG) the composition is skewed to acidic residues. A coiled-coil region spans residues 939–964 (RRRILSYERQYRTWAERMAELRLQED). NF-X1-type zinc fingers lie at residues 1291–1313 (CGHV…QCMK), 1375–1393 (CGHR…LCSE), 1433–1455 (CGHP…RCQQ), and 1463–1480 (CSHK…PCQR). Residues 1733–1764 (LAKKRLSFSSQELSDLQSEIQRLTYLVNLLMR) are a coiled coil. Residues 1818-1889 (ISDEERVQIV…LASEMDGAQH (72 aa)) form an RZ-type zinc finger. Residues Cys1840, His1844, Cys1860, and Cys1863 each contribute to the Zn(2+) site.

Belongs to the ZNFX1 family. In terms of assembly, interacts with MAVS.

Its subcellular location is the mitochondrion outer membrane. It is found in the cytoplasm. It localises to the stress granule. Its function is as follows. RNA-binding protein that initiates the antiviral response and is required to restrict the replication of RNA viruses. Acts as a double-stranded RNA (dsRNA) sensor that recognizes viral RNA and then interacts with MAVS to initiate the type I interferon response. Also required for immunity against some bacteria, such as mycobacteria. This Mus musculus (Mouse) protein is NFX1-type zinc finger-containing protein 1.